A 365-amino-acid chain; its full sequence is Putrescine carbamoyltransferase (365 aa).

Residues serine 54–arginine 58, arginine 105, and histidine 132 each bind carbamoyl phosphate. Residue histidine 277–proline 280 coordinates putrescine.

It belongs to the aspartate/ornithine carbamoyltransferase superfamily. PTCase family. In terms of assembly, homotrimer.

Its subcellular location is the cytoplasm. It catalyses the reaction carbamoyl phosphate + putrescine = N-carbamoylputrescine + phosphate + H(+). The protein operates within amine and polyamine biosynthesis; putrescine biosynthesis via agmatine pathway; putrescine from N-carbamoylputrescine (transferase route): step 1/1. In terms of biological role, catalyzes the phosphorolysis of N-carbamoylputrescine to form carbamoyl phosphate and putrescine. Is involved in the degradation pathway of the polyamine agmatine. The sequence is that of Putrescine carbamoyltransferase from Mycoplasma capricolum subsp. capricolum (strain California kid / ATCC 27343 / NCTC 10154).